We begin with the raw amino-acid sequence, 225 residues long: Small ribosomal subunit protein mS26 (225 aa).

Belongs to the mitochondrion-specific ribosomal protein mS26 family. In terms of assembly, component of the mitochondrial ribosome small subunit (28S) which comprises a 12S rRNA and about 30 distinct proteins.

The protein localises to the mitochondrion. The chain is Small ribosomal subunit protein mS26 (mRpS26) from Drosophila melanogaster (Fruit fly).